Here is a 586-residue protein sequence, read N- to C-terminus: Switch-associated protein 70 (586 aa).

Residues 210–306 (DVLKQGYMLK…WIQAIQTTVS (97 aa)) enclose the PH domain. Positions 316-538 (HKEARQKRKE…NNTRSWKDKV (223 aa)) form a coiled coil.

As to quaternary structure, the SWAP complex consists of NPM1, NCL, PARP1 and SWAP70. Post-translationally, tyrosine-phosphorylated.

It localises to the cytoplasm. It is found in the cell membrane. The protein localises to the nucleus. Its subcellular location is the cell projection. The protein resides in the lamellipodium. Its function is as follows. Phosphatidylinositol 3,4,5-trisphosphate-dependent guanine nucleotide exchange factor (GEF) which, independently of RAS, transduces signals from tyrosine kinase receptors to RAC. It also mediates signaling of membrane ruffling. Regulates the actin cytoskeleton as an effector or adapter protein in response to agonist stimulated phosphatidylinositol (3,4)-bisphosphate production and cell protrusion. In Gallus gallus (Chicken), this protein is Switch-associated protein 70 (SWAP70).